Here is a 347-residue protein sequence, read N- to C-terminus: Eukaryotic translation initiation factor 3 subunit H (347 aa).

One can recognise an MPN domain in the interval 6–149; that stretch reads VCIDSSVALK…PSSTGPQGHT (144 aa). The disordered stretch occupies residues 136–155; the sequence is SDTDPSSTGPQGHTTTTPSG. Residues 138–155 are compositionally biased toward polar residues; sequence TDPSSTGPQGHTTTTPSG.

It belongs to the eIF-3 subunit H family. As to quaternary structure, component of the eukaryotic translation initiation factor 3 (eIF-3) complex.

It localises to the cytoplasm. In terms of biological role, component of the eukaryotic translation initiation factor 3 (eIF-3) complex, which is involved in protein synthesis of a specialized repertoire of mRNAs and, together with other initiation factors, stimulates binding of mRNA and methionyl-tRNAi to the 40S ribosome. The eIF-3 complex specifically targets and initiates translation of a subset of mRNAs involved in cell proliferation. The sequence is that of Eukaryotic translation initiation factor 3 subunit H from Yarrowia lipolytica (strain CLIB 122 / E 150) (Yeast).